We begin with the raw amino-acid sequence, 180 residues long: Adenine phosphoribosyltransferase (180 aa).

The protein belongs to the purine/pyrimidine phosphoribosyltransferase family. Homodimer.

It localises to the cytoplasm. It carries out the reaction AMP + diphosphate = 5-phospho-alpha-D-ribose 1-diphosphate + adenine. It participates in purine metabolism; AMP biosynthesis via salvage pathway; AMP from adenine: step 1/1. Its function is as follows. Catalyzes a salvage reaction resulting in the formation of AMP, that is energically less costly than de novo synthesis. The protein is Adenine phosphoribosyltransferase of Mycolicibacterium smegmatis (strain ATCC 700084 / mc(2)155) (Mycobacterium smegmatis).